Consider the following 212-residue polypeptide: MNIFRFLGDISHLSAIFILLLKIWKSRSCAGISGKSQLLFAIVFTARYLDLFTNYISFYNTSMKVVYVASSYATVWMIYSKFKATYDGNHDTFRVEFLIVPTAILAFLVNHDFTPLEIFWTFSIYLESVAILPQLFMVSKTGEAETITSHYLFALGIYRTLYLFNWIWRYQFEGFFDLIAIVAGLVQTVLYCDFFYLYVTKVLKGKKLSLPA.

The Lumenal portion of the chain corresponds to 1-4; it reads MNIF. A helical membrane pass occupies residues 5-24; that stretch reads RFLGDISHLSAIFILLLKIW. Residues 25 to 32 are Cytoplasmic-facing; that stretch reads KSRSCAGI. The helical transmembrane segment at 33-52 threads the bilayer; sequence SGKSQLLFAIVFTARYLDLF. The interaction with the K-D-E-L motif on target proteins stretch occupies residues 47 to 48; it reads RY. Residues 53-58 are Lumenal-facing; it reads TNYISF. A helical transmembrane segment spans residues 59–79; the sequence is YNTSMKVVYVASSYATVWMIY. Residues 80–92 are Cytoplasmic-facing; it reads SKFKATYDGNHDT. The helical transmembrane segment at 93-110 threads the bilayer; the sequence is FRVEFLIVPTAILAFLVN. Residues 111-116 lie on the Lumenal side of the membrane; it reads HDFTPL. The helical transmembrane segment at 117-135 threads the bilayer; that stretch reads EIFWTFSIYLESVAILPQL. At 136–149 the chain is on the cytoplasmic side; that stretch reads FMVSKTGEAETITS. A helical transmembrane segment spans residues 150 to 168; it reads HYLFALGIYRTLYLFNWIW. The tract at residues 159-169 is interaction with the K-D-E-L motif on target proteins; the sequence is RTLYLFNWIWR. The Lumenal portion of the chain corresponds to 169-178; sequence RYQFEGFFDL. A helical membrane pass occupies residues 179–199; it reads IAIVAGLVQTVLYCDFFYLYV. Topologically, residues 200–212 are cytoplasmic; the sequence is TKVLKGKKLSLPA. Residues 204 to 207 form an important for recycling of cargo proteins with the sequence motif K-D-E-L from the Golgi to the endoplasmic reticulum region; sequence KGKK.

This sequence belongs to the ERD2 family.

It is found in the golgi apparatus membrane. The protein resides in the cytoplasmic vesicle. Its subcellular location is the COPI-coated vesicle membrane. It localises to the endoplasmic reticulum membrane. The protein localises to the endoplasmic reticulum-Golgi intermediate compartment membrane. Functionally, receptor for the C-terminal sequence motif K-D-E-L that is present on endoplasmic reticulum resident proteins and that mediates their recycling from the Golgi back to the endoplasmic reticulum. The polypeptide is ER lumen protein-retaining receptor 1-A (kdelr1-a) (Xenopus laevis (African clawed frog)).